Reading from the N-terminus, the 723-residue chain is Transmembrane channel-like protein 7 (723 aa).

Disordered stretches follow at residues 1 to 28 (MSESSGSALQPGRPSRQPAVHPENLSLD) and 51 to 71 (RRRTTVHSRDKQSGTLLKPTD). Topologically, residues 1–168 (MSESSGSALQ…GIQSYFSFLR (168 aa)) are extracellular. Asn-24 carries N-linked (GlcNAc...) asparagine glycosylation. Asn-84 carries N-linked (GlcNAc...) asparagine glycosylation. Residue Ser-89 is modified to Phosphoserine. Asn-96 carries an N-linked (GlcNAc...) asparagine glycan. Residues 169–189 (FLVLLNLVIFLIIFMLVLLPV) traverse the membrane as a helical segment. The Cytoplasmic portion of the chain corresponds to 190 to 219 (LLTKYKITNSSFVLIPFKDMDKQCTVYPVS). Residues 220–240 (SSGLIYFYSYIIDLLSGTGFL) traverse the membrane as a helical segment. Over 241-263 (EETSLFYGHYTIDGVKFQNFTYD) the chain is Extracellular. The N-linked (GlcNAc...) asparagine glycan is linked to Asn-259. Residues 264–284 (LPLAYLLSTIASLALSLLWIV) form a helical membrane-spanning segment. Over 285–362 (KRSVEGFKIN…EETIRIYSLR (78 aa)) the chain is Cytoplasmic. A helical transmembrane segment spans residues 363–383 (LFLNCIVLAVLGACFYAIYVA). Residues 384–404 (TVFSQEHMKKEIDKMVFGENL) are Extracellular-facing. Residues 405-425 (FILYLPSIVITLANFITPMIF) traverse the membrane as a helical segment. Residues 426-494 (AKIIRYEDYS…PCWETQVGQE (69 aa)) lie on the Cytoplasmic side of the membrane. Residues 495 to 515 (MYKLMIFDFIIILAVTLFVDF) form a helical membrane-spanning segment. The Extracellular portion of the chain corresponds to 516 to 555 (PRKLLVTYCSSCKLIQCWGQQEFAIPDNVLGIVYGQTICW). The chain crosses the membrane as a helical span at residues 556-576 (IGAFFSPLLPAIATLKFIIIF). The Cytoplasmic portion of the chain corresponds to 577–601 (YVKEWSLLYTCRPSPRPFRASNSNF). The chain crosses the membrane as a helical span at residues 602–622 (FFLLVLLIGLCLAIIPLTISI). Residues 623-665 (SRIPSSKACGPFTNFNTTWEVIPKTVSTFPSSLQSFIHGVTSE) lie on the Extracellular side of the membrane. N-linked (GlcNAc...) asparagine glycosylation is present at Asn-638. The chain crosses the membrane as a helical span at residues 666–686 (AFAVPFFMIICLIMFYFIALA). Residues 687-723 (GAHKRVVIQLREQLSLESRDKCYLIQKLTEAQRDMRN) are Cytoplasmic-facing.

It belongs to the TMC family. Interacts with PIEZO2; the interaction inhibits PIEZO2-conducted mechanically activated currents.

It is found in the membrane. In terms of biological role, acts as an inhibitory modulator of PIEZO2 mechanosensitive channel in dorsal root ganglion (DRG) neurons through physical interactions or interference with the interaction between PIEZO2 and the cytoskeleton. The chain is Transmembrane channel-like protein 7 from Homo sapiens (Human).